We begin with the raw amino-acid sequence, 194 residues long: dTTP/UTP pyrophosphatase (194 aa).

Catalysis depends on Asp76, which acts as the Proton acceptor.

Belongs to the Maf family. YhdE subfamily. The cofactor is a divalent metal cation.

Its subcellular location is the cytoplasm. It catalyses the reaction dTTP + H2O = dTMP + diphosphate + H(+). The enzyme catalyses UTP + H2O = UMP + diphosphate + H(+). Its function is as follows. Nucleoside triphosphate pyrophosphatase that hydrolyzes dTTP and UTP. May have a dual role in cell division arrest and in preventing the incorporation of modified nucleotides into cellular nucleic acids. The polypeptide is dTTP/UTP pyrophosphatase (Shewanella oneidensis (strain ATCC 700550 / JCM 31522 / CIP 106686 / LMG 19005 / NCIMB 14063 / MR-1)).